An 89-amino-acid polypeptide reads, in one-letter code: Small ribosomal subunit protein uS15 (89 aa).

This sequence belongs to the universal ribosomal protein uS15 family. As to quaternary structure, part of the 30S ribosomal subunit. Forms a bridge to the 50S subunit in the 70S ribosome, contacting the 23S rRNA.

Functionally, one of the primary rRNA binding proteins, it binds directly to 16S rRNA where it helps nucleate assembly of the platform of the 30S subunit by binding and bridging several RNA helices of the 16S rRNA. Its function is as follows. Forms an intersubunit bridge (bridge B4) with the 23S rRNA of the 50S subunit in the ribosome. This is Small ribosomal subunit protein uS15 from Aliivibrio salmonicida (strain LFI1238) (Vibrio salmonicida (strain LFI1238)).